The chain runs to 488 residues: UDP-N-acetylmuramate--L-alanine ligase (488 aa).

Residue 129–135 coordinates ATP; it reads GSHGKTT.

It belongs to the MurCDEF family.

It is found in the cytoplasm. It catalyses the reaction UDP-N-acetyl-alpha-D-muramate + L-alanine + ATP = UDP-N-acetyl-alpha-D-muramoyl-L-alanine + ADP + phosphate + H(+). The protein operates within cell wall biogenesis; peptidoglycan biosynthesis. Functionally, cell wall formation. In Prochlorococcus marinus (strain MIT 9313), this protein is UDP-N-acetylmuramate--L-alanine ligase.